A 654-amino-acid chain; its full sequence is APC membrane recruitment protein 2 (654 aa).

Disordered stretches follow at residues 1–105, 224–289, 316–369, and 381–654; these read MEVQ…TAPL, ECGN…QSEQ, IIAD…PQVS, and PAHQ…QSRK. The segment covering 9–18 has biased composition (pro residues); it reads EPPPCDPQPP. A compositionally biased stretch (basic and acidic residues) spans 60-70; the sequence is ELVRSKTHDGL. Over residues 427–454 the composition is skewed to basic and acidic residues; sequence PQKDEDSPAPRRAEPVLHHAPARLEKRP. Residues 468 to 479 show a composition bias toward polar residues; sequence SGSSKTGKQQPS. The span at 565–575 shows a compositional bias: low complexity; the sequence is SPKCSSSATSS. Positions 576–586 are enriched in polar residues; it reads FRSMKGSTSLP. Residues 601–621 show a composition bias toward low complexity; that stretch reads SHSSSQGALSSNLSPTSTTPP. The segment covering 644–654 has biased composition (polar residues); sequence GKSTSTSQSRK.

Belongs to the Amer family.

The protein localises to the cell membrane. In terms of biological role, negative regulator of the canonical Wnt signaling pathway involved in neuroectodermal patterning. Acts by specifically binding phosphatidylinositol 4,5-bisphosphate (PtdIns(4,5)P2), translocating to the cell membrane and interacting with key regulators of the canonical Wnt signaling pathway, such as components of the beta-catenin destruction complex. The protein is APC membrane recruitment protein 2 (amer2) of Danio rerio (Zebrafish).